Reading from the N-terminus, the 396-residue chain is L-lactate dehydrogenase (396 aa).

The 380-residue stretch at 1-380 folds into the FMN hydroxy acid dehydrogenase domain; the sequence is MIISAASDYR…TQDSLVQELS (380 aa). Y24 lines the substrate pocket. Residues S106 and Q127 each contribute to the FMN site. Y129 serves as a coordination point for substrate. T155 contributes to the FMN binding site. R164 provides a ligand contact to substrate. K251 is a binding site for FMN. H275 (proton acceptor) is an active-site residue. R278 provides a ligand contact to substrate. 306–330 contacts FMN; sequence DSGIRNGLDVVRMIALGADTVLLGR.

It belongs to the FMN-dependent alpha-hydroxy acid dehydrogenase family. FMN is required as a cofactor.

It localises to the cell inner membrane. It carries out the reaction (S)-lactate + A = pyruvate + AH2. Catalyzes the conversion of L-lactate to pyruvate. Is coupled to the respiratory chain. This Escherichia coli (strain SMS-3-5 / SECEC) protein is L-lactate dehydrogenase.